A 150-amino-acid chain; its full sequence is Arginine repressor (150 aa).

This sequence belongs to the ArgR family.

The protein resides in the cytoplasm. Its pathway is amino-acid biosynthesis; L-arginine biosynthesis [regulation]. Functionally, regulates arginine biosynthesis genes. This chain is Arginine repressor, found in Symbiobacterium thermophilum (strain DSM 24528 / JCM 14929 / IAM 14863 / T).